An 89-amino-acid chain; its full sequence is Small ribosomal subunit protein uS15 (89 aa).

Belongs to the universal ribosomal protein uS15 family. In terms of assembly, part of the 30S ribosomal subunit. Forms a bridge to the 50S subunit in the 70S ribosome, contacting the 23S rRNA.

In terms of biological role, one of the primary rRNA binding proteins, it binds directly to 16S rRNA where it helps nucleate assembly of the platform of the 30S subunit by binding and bridging several RNA helices of the 16S rRNA. Functionally, forms an intersubunit bridge (bridge B4) with the 23S rRNA of the 50S subunit in the ribosome. This Orientia tsutsugamushi (strain Boryong) (Rickettsia tsutsugamushi) protein is Small ribosomal subunit protein uS15.